A 758-amino-acid polypeptide reads, in one-letter code: GPI ethanolamine phosphate transferase 2 (758 aa).

N-linked (GlcNAc...) asparagine glycosylation is found at asparagine 28, asparagine 77, and asparagine 178. 3 consecutive transmembrane segments (helical) span residues 405–425 (LVAISILGACSILSLILFRNL), 431–451 (LLAFAPFVVQNIIIVFSSSFI), and 455–472 (HVIWYFAAVSLSLLQLLN). Asparagine 493 carries an N-linked (GlcNAc...) asparagine glycan. Helical transmembrane passes span 533-553 (PSPINFLSSMFIAFYKLMPII), 561-581 (PIIASFDYTFFVRIIWSLLLI), 598-618 (LFILLLTRLENMGLYLLYDIW), 667-687 (IFAVGILLFTSVFAGALWWCL), 698-718 (VKTFWIMSSISLTFLCISCFI), and 733-753 (LLYNASWASMYFLAKCLISTI).

This sequence belongs to the PIGG/PIGN/PIGO family. PIGG subfamily.

The protein localises to the endoplasmic reticulum membrane. The protein operates within glycolipid biosynthesis; glycosylphosphatidylinositol-anchor biosynthesis. In terms of biological role, ethanolamine phosphate transferase involved in glycosylphosphatidylinositol-anchor biosynthesis. Transfers ethanolamine phosphate to the GPI second mannose. The sequence is that of GPI ethanolamine phosphate transferase 2 (las21) from Schizosaccharomyces pombe (strain 972 / ATCC 24843) (Fission yeast).